A 68-amino-acid chain; its full sequence is Neuronal regeneration-related protein (68 aa).

The interval 21 to 54 (MEGRLPKGRLPVPKEVNRKKNDETNAASLTPLGS) is disordered. A compositionally biased stretch (polar residues) spans 44–54 (TNAASLTPLGS).

In terms of assembly, interacts with the latency-associated peptides (LAP) of TGFB1 and TGFB2; the interaction results in a decrease in TGFB autoinduction. Interacts with FLNA. In terms of processing, phosphorylated on Ser-59. Phosphorylation decreases stability and activity.

The protein resides in the cytoplasm. Functionally, may have roles in neural function and cellular differentiation. Ectopic expression promotes axonal regeneration, induces differentiation of fibroblast into myofibroblast, induces myofibroblast ameboid migration, augments motility of gliomas, and increases retinoic-acid regulation of lipid-droplet biogenesis. Down-regulates the expression of TGFB1 and TGFB2 but not of TGFB3. May play a role in the regulation of alveolar generation. The protein is Neuronal regeneration-related protein (NREP) of Macaca fascicularis (Crab-eating macaque).